Consider the following 966-residue polypeptide: Polycystin-2 (966 aa).

The segment at 1–106 (MVNSRRVQPQ…DDDEVEGEEG (106 aa)) is disordered. Residues 1 to 217 (MVNSRRVQPQ…NANREKYLKS (217 aa)) lie on the Cytoplasmic side of the membrane. The segment covering 30–44 (VAGGAGLAVPGGLGE) has biased composition (gly residues). Residues 46–56 (RGLEIEMERIR) show a composition bias toward basic and acidic residues. Residues 58-79 (AAARDPPAGASASPSPPLSSCS) are compositionally biased toward low complexity. Phosphoserine occurs at positions 72 and 76. Over residues 91–105 (EAEEDDDDDEVEGEE) the composition is skewed to acidic residues. The residue at position 135 (R135) is an Omega-N-methylarginine. Positions 147–179 (HLSGRRRRLEDQGAQCPSPAGGGDPLHRHLPLE) are disordered. Residues 218 to 239 (VLRELVTYLFFLVVLCILTYGM) traverse the membrane as a helical segment. The Extracellular segment spans residues 240–466 (MSSNVYYYTR…PVKLIRYVTA (227 aa)). 3 N-linked (GlcNAc...) asparagine glycosylation sites follow: N297, N303, and N326. A disulfide bond links C329 and C342. Residues N360 and N373 are each glycosylated (N-linked (GlcNAc...) asparagine). Residues 467-487 (FDFFLAACEIIFCFFIIYYVV) form a helical membrane-spanning segment. Residues 488 to 503 (EEILEIRIHRLSYFRS) lie on the Cytoplasmic side of the membrane. The chain crosses the membrane as a helical span at residues 504-524 (FWNCLDVVIVVLSVVAMVINI). The Extracellular portion of the chain corresponds to 525-550 (YRMSNAEGLLQFLEDQNSFPNFEHVA). The helical transmembrane segment at 551 to 571 (YWQIQFNNISAVMVFLVWIKL) threads the bilayer. Position 555 (Q555) interacts with cholesterol. Residues 572 to 595 (FKFINFNRTMSQLSTTMSRCAKDL) are Cytoplasmic-facing. Residues 596–617 (FGFTIMFSIIFLAYAQLAYLVF) form a helical membrane-spanning segment. Over 618–629 (GTQVDDFSTFQE) the chain is Extracellular. An intramembrane region (pore-forming) is located at residues 630–644 (CIFTQFRIILGDINF). L639 serves as a coordination point for Ca(2+). The Selectivity filter motif lies at 639-641 (LGD). The Extracellular segment spans residues 645-652 (AEIEEANR). The chain crosses the membrane as a helical span at residues 653–673 (VLGPLYFTTFVFFMFFILLNM). Residues 674 to 966 (FLAIINDSYS…GGNGSANVHA (293 aa)) lie on the Cytoplasmic side of the membrane. Residues 748 to 783 (HTDAEIEAIFTKYDQDGDQELTEREHQQMRDDLEKE) form the EF-hand domain. Ca(2+)-binding residues include D761, D763, D765, E767, and E772. The segment at 764–828 (GDQELTEREH…GHSSRRRGSI (65 aa)) is disordered. The segment covering 768 to 793 (LTEREHQQMRDDLEKEREDLDLEHSS) has biased composition (basic and acidic residues). The segment covering 794-805 (LPRPMSSRSFPR) has biased composition (low complexity). A phosphoserine mark is found at S799, S806, S810, and S827. The segment at 801 to 820 (RSFPRSLDDSEEEDDEDSGH) is linker. The important for interaction with PACS1 and PACS2 stretch occupies residues 808-819 (DDSEEEDDEDSG). A coiled-coil region spans residues 831-870 (GVSYEEFQVLVRRVDRMEHSIGSIVSKIDAVIVKLEIMER). Residues 914 to 966 (WESDDAASQTGHGVSTQVGLGGQPHPRNPRPPSSQSAEGLEGGGGNGSANVHA) form a disordered region. Polar residues predominate over residues 919–931 (AASQTGHGVSTQV).

The protein belongs to the polycystin family. In terms of assembly, homotetramer. Component of the heterotetrameric polycystin channel complex with PKD1; the tetramer contains one PKD1 chain and three PKD2 chains. Interaction with PKD1 is required for ciliary localization. Isoform 1 interacts with PKD1 while isoform 3 does not. Interacts with PKD1L1. Interacts with CD2AP. Interacts with HAX1. Interacts with NEK8. Part of a complex containing AKAP5, ADCY5, ADCY6 and PDE4C. Interacts (via C-terminus) with TRPV4 (via C-terminus). Interacts (via C-terminal acidic region) with PACS1 and PACS2; these interactions retain the protein in the endoplasmic reticulum and prevent trafficking to the cell membrane. Interacts with TMEM33; enhancing its opening at the ER membrane. Interacts with TMEM120A; TMEM120A inhibits PKD2 channel activity through the physical association of PKD2 with TMEM120A. Interacts (via N-terminus) with RYR2; regulates RYR2 channel activity. N-glycosylated. The four subunits in a tetramer probably differ in the extent of glycosylation; simultaneous glycosylation of all experimentally validated sites would probably create steric hindrance. Post-translationally, sumoylated by SUMO1; sumoylation regulates PKD2 membrane recycling and is necessary for intravascular pressure-induced arterial contractility. In terms of processing, phosphorylated. Phosphorylation is important for protein function; a mutant that lacks the N-terminal phosphorylation sites cannot complement a zebrafish pkd2-deficient mutant. PKD-mediated phosphorylation at the C-terminus regulates its function in the release of Ca(2+) stores from the endoplasmic reticulum. Phosphorylation at Ser-810 regulates PKD2 trafficking. Phosphorylation at Ser-72 is required for PKD2 trafficking to or retention at the lateral plasma membrane. Phosphorylation at Ser-799, Ser-810 and Ser-827 regulates PKD2 channel activity. As to expression, detected in kidney epithelium (at protein level). Highly expressed on basolateral membranes in distal convoluted tubules and medullary thick ascending limbs of Henle. Detected at much lower levels in cortical and medullary collecting tubules, and not detected in the glomerular tuft, in thin limbs of Henle, interstitium and blood vessels (at protein level). Expressed in mesenchymally derived structures in the developing embryo at day 12.5. Isoform 1 is predominantly expressed in kidney at all developmental stages with high levels also detected in lung. Isoform 3 shows highest expression in brain with lower expression in kidney and lung, low levels in thymus and is hardly detectable in liver.

The protein resides in the cell projection. It localises to the cilium membrane. The protein localises to the cell membrane. It is found in the basolateral cell membrane. Its subcellular location is the cytoplasmic vesicle membrane. The protein resides in the endoplasmic reticulum membrane. It localises to the golgi apparatus. The protein localises to the vesicle. It is found in the secreted. Its subcellular location is the extracellular exosome. It carries out the reaction K(+)(in) = K(+)(out). The enzyme catalyses Na(+)(in) = Na(+)(out). The catalysed reaction is Ca(2+)(in) = Ca(2+)(out). Its activity is regulated as follows. Channel activity is regulated by phosphorylation. The channel is activated by increased cytoplasmic Ca(2+) (in the uM range) and by membrane depolarization. TMEM120A inhibits the channel activity of PKD2, and mediates mechanosensitivity of the PKD2-TMEM120A channel complex. At the endoplasmic reticulum membrane (ER), TMEM33 enhances its channel activity. PKD1/ PKD2 complex on the plasma membrane is activated by PKD1 N-terminus. Forms a nonselective cation channel. Can function as a homotetrameric ion channel or can form heteromer with PKD1. Displays distinct function depending on its subcellular localization and regulation by its binding partners. Functions as a cation channel, with a preference for monovalent cations over divalent cations that allows K(+), Na(+) and Ca(2+) influx, with low selectivity for Ca(2+). Involved in fluid-flow mechanosensation by the primary cilium in renal epithelium. In the endoplasmic reticulum, likely functions as a K(+) channel to facilitate Ca(2+) release. The heterotetrameric PKD1/PKD2 channel has higher Ca(2+) permeability than homomeric PKD2 channel and acts as a primarily Ca(2+)-permeable channel. PKD1 and PKD2 may function through a common signaling pathway that is necessary to maintain the normal, differentiated state of renal tubule cells. Interacts with and acts as a regulator of a number of other channels, such as TRPV4, TRPC1, IP3R, RYR2, ultimately further affecting intracellular signaling, to modulate intracellular Ca(2+) signaling. Together with TRPV4, forms mechano- and thermosensitive channels in cilium. In cardiomyocytes, PKD2 modulates Ca(2+) release from stimulated RYR2 receptors through direct association. Also involved in left-right axis specification via its role in sensing nodal flow; forms a complex with PKD1L1 in cilia to facilitate flow detection in left-right patterning. Acts as a regulator of cilium length together with PKD1. Mediates systemic blood pressure and contributes to the myogenic response in cerebral arteries though vasoconstriction. In Mus musculus (Mouse), this protein is Polycystin-2.